A 280-amino-acid chain; its full sequence is Phosphatidylserine decarboxylase proenzyme (280 aa).

Active-site charge relay system; for autoendoproteolytic cleavage activity residues include Asp88, His144, and Ser247. Ser247 (schiff-base intermediate with substrate; via pyruvic acid; for decarboxylase activity) is an active-site residue. Ser247 carries the post-translational modification Pyruvic acid (Ser); by autocatalysis.

This sequence belongs to the phosphatidylserine decarboxylase family. PSD-B subfamily. Prokaryotic type I sub-subfamily. As to quaternary structure, heterodimer of a large membrane-associated beta subunit and a small pyruvoyl-containing alpha subunit. It depends on pyruvate as a cofactor. In terms of processing, is synthesized initially as an inactive proenzyme. Formation of the active enzyme involves a self-maturation process in which the active site pyruvoyl group is generated from an internal serine residue via an autocatalytic post-translational modification. Two non-identical subunits are generated from the proenzyme in this reaction, and the pyruvate is formed at the N-terminus of the alpha chain, which is derived from the carboxyl end of the proenzyme. The autoendoproteolytic cleavage occurs by a canonical serine protease mechanism, in which the side chain hydroxyl group of the serine supplies its oxygen atom to form the C-terminus of the beta chain, while the remainder of the serine residue undergoes an oxidative deamination to produce ammonia and the pyruvoyl prosthetic group on the alpha chain. During this reaction, the Ser that is part of the protease active site of the proenzyme becomes the pyruvoyl prosthetic group, which constitutes an essential element of the active site of the mature decarboxylase.

It localises to the cell membrane. It catalyses the reaction a 1,2-diacyl-sn-glycero-3-phospho-L-serine + H(+) = a 1,2-diacyl-sn-glycero-3-phosphoethanolamine + CO2. It functions in the pathway phospholipid metabolism; phosphatidylethanolamine biosynthesis; phosphatidylethanolamine from CDP-diacylglycerol: step 2/2. Its function is as follows. Catalyzes the formation of phosphatidylethanolamine (PtdEtn) from phosphatidylserine (PtdSer). The protein is Phosphatidylserine decarboxylase proenzyme of Stenotrophomonas maltophilia (strain R551-3).